The chain runs to 175 residues: Apoptosis regulator Bcl-2 homolog (175 aa).

The BH1 signature appears at 75 to 94 (QVLEDKINWGRIITIIAFCA). The BH2 signature appears at 105–120 (SPQYYDGIISEAITDA).

It belongs to the Bcl-2 family. Interacts with host BAX; this interaction inhibits BAX oligomerization and subsequent activation. Interacts with host BAK1.

Its subcellular location is the host mitochondrion. Its function is as follows. Plays a role in the inhibition of host apoptosis by sequestering and inactivating multiple proapoptotic BCL-2 proteins, including BAK1 and BAX. In Vertebrata (FPV), this protein is Apoptosis regulator Bcl-2 homolog.